The sequence spans 938 residues: TFIIH basal transcription factor complex helicase/translocase XPB subunit (938 aa).

The 169-residue stretch at 394–562 (FRSGNKAHQG…DLRHLVGPKL (169 aa)) folds into the Helicase ATP-binding domain. 407-414 (LPCGAGKT) lines the ATP pocket. The DEVH box motif lies at 515–518 (DEVH). The Helicase C-terminal domain maps to 627–781 (WCTQALLEFH…SYRVLQSDMV (155 aa)).

It belongs to the helicase family. RAD25/XPB subfamily. As to quaternary structure, component of the 7-subunit TFIIH core complex composed of XPB, XPD, SSL1, TFB1, TFB2, TFB4 and TFB5.

The catalysed reaction is Couples ATP hydrolysis with the unwinding of duplex DNA by translocating in the 3'-5' direction.. It catalyses the reaction ATP + H2O = ADP + phosphate + H(+). ATP-dependent 3'-5' DNA helicase/translocase; binds dsDNA rather than ssDNA, unzipping it in a translocase rather than classical helicase activity. Component of the general transcription factor IIH (TFIIH) core complex, involved in spliced leader RNA (SL RNA) gene transcription by RNA polymerase II. TFIIH has an essential role in transcription initiation. When the pre-initiation complex (PIC) has been established, TFIIH is required for promoter opening and promoter escape. The ATPase activity of XPB is required for promoter opening and promoter escape. In Trypanosoma brucei brucei (strain 927/4 GUTat10.1), this protein is TFIIH basal transcription factor complex helicase/translocase XPB subunit.